Consider the following 223-residue polypeptide: 2-C-methyl-D-erythritol 4-phosphate cytidylyltransferase (223 aa).

It belongs to the IspD/TarI cytidylyltransferase family. IspD subfamily.

It catalyses the reaction 2-C-methyl-D-erythritol 4-phosphate + CTP + H(+) = 4-CDP-2-C-methyl-D-erythritol + diphosphate. The protein operates within isoprenoid biosynthesis; isopentenyl diphosphate biosynthesis via DXP pathway; isopentenyl diphosphate from 1-deoxy-D-xylulose 5-phosphate: step 2/6. Its function is as follows. Catalyzes the formation of 4-diphosphocytidyl-2-C-methyl-D-erythritol from CTP and 2-C-methyl-D-erythritol 4-phosphate (MEP). The sequence is that of 2-C-methyl-D-erythritol 4-phosphate cytidylyltransferase from Prochlorococcus marinus (strain MIT 9215).